Consider the following 601-residue polypeptide: Glutathione-regulated potassium-efflux system protein KefB (601 aa).

The next 13 membrane-spanning stretches (helical) occupy residues serine 4–alanine 24, isoleucine 29–phenylalanine 49, glutamate 55–leucine 75, isoleucine 87–methionine 107, alanine 115–methionine 135, valine 152–glycine 172, histidine 177–glycine 197, phenylalanine 207–glycine 227, leucine 230–leucine 250, glycine 268–tyrosine 288, leucine 291–leucine 311, methionine 324–alanine 344, and alanine 356–valine 376. The RCK N-terminal domain occupies lysine 400 to threonine 519.

This sequence belongs to the monovalent cation:proton antiporter 2 (CPA2) transporter (TC 2.A.37) family. KefB subfamily. Interacts with the regulatory subunit KefG.

It is found in the cell inner membrane. Pore-forming subunit of a potassium efflux system that confers protection against electrophiles. Catalyzes K(+)/H(+) antiport. The polypeptide is Glutathione-regulated potassium-efflux system protein KefB (Escherichia coli (strain SMS-3-5 / SECEC)).